Consider the following 93-residue polypeptide: Small ribosomal subunit protein uS19 (93 aa).

Belongs to the universal ribosomal protein uS19 family.

Functionally, protein S19 forms a complex with S13 that binds strongly to the 16S ribosomal RNA. The polypeptide is Small ribosomal subunit protein uS19 (rpsS) (Mycobacterium leprae (strain TN)).